A 271-amino-acid chain; its full sequence is Imidazole glycerol phosphate synthase subunit HisF (271 aa).

Catalysis depends on residues D12 and D136.

This sequence belongs to the HisA/HisF family. Heterodimer of HisH and HisF.

It is found in the cytoplasm. It catalyses the reaction 5-[(5-phospho-1-deoxy-D-ribulos-1-ylimino)methylamino]-1-(5-phospho-beta-D-ribosyl)imidazole-4-carboxamide + L-glutamine = D-erythro-1-(imidazol-4-yl)glycerol 3-phosphate + 5-amino-1-(5-phospho-beta-D-ribosyl)imidazole-4-carboxamide + L-glutamate + H(+). It participates in amino-acid biosynthesis; L-histidine biosynthesis; L-histidine from 5-phospho-alpha-D-ribose 1-diphosphate: step 5/9. Its function is as follows. IGPS catalyzes the conversion of PRFAR and glutamine to IGP, AICAR and glutamate. The HisF subunit catalyzes the cyclization activity that produces IGP and AICAR from PRFAR using the ammonia provided by the HisH subunit. In Haloarcula marismortui (strain ATCC 43049 / DSM 3752 / JCM 8966 / VKM B-1809) (Halobacterium marismortui), this protein is Imidazole glycerol phosphate synthase subunit HisF.